The sequence spans 520 residues: Cholesterol side-chain cleavage enzyme, mitochondrial (520 aa).

The N-terminal 39 residues, 1 to 39 (MLVRGLPLRSVLVKGCQPLLSAPREGPGHPRVPTGEGAG), are a transit peptide targeting the mitochondrion. A disordered region spans residues 19 to 47 (LLSAPREGPGHPRVPTGEGAGMSSHSPRP). Cys461 is a heme binding site.

The protein belongs to the cytochrome P450 family. As to quaternary structure, interacts with FDX1/adrenodoxin. Heme is required as a cofactor.

The protein localises to the mitochondrion inner membrane. It catalyses the reaction 6 reduced [adrenodoxin] + cholesterol + 3 O2 + 6 H(+) = 4-methylpentanal + pregnenolone + 6 oxidized [adrenodoxin] + 4 H2O. The catalysed reaction is 2 reduced [adrenodoxin] + cholesterol + O2 + 2 H(+) = (22R)-hydroxycholesterol + 2 oxidized [adrenodoxin] + H2O. It carries out the reaction (22R)-hydroxycholesterol + 2 reduced [adrenodoxin] + O2 + 2 H(+) = (20R,22R)-20,22-dihydroxycholesterol + 2 oxidized [adrenodoxin] + H2O. The enzyme catalyses (20R,22R)-20,22-dihydroxycholesterol + 2 reduced [adrenodoxin] + O2 + 2 H(+) = 4-methylpentanal + pregnenolone + 2 oxidized [adrenodoxin] + 2 H2O. The protein operates within lipid metabolism; C21-steroid hormone metabolism. It participates in steroid metabolism; cholesterol metabolism. In terms of biological role, a cytochrome P450 monooxygenase that catalyzes the side-chain hydroxylation and cleavage of cholesterol to pregnenolone, the precursor of most steroid hormones. Catalyzes three sequential oxidation reactions of cholesterol, namely the hydroxylation at C22 followed with the hydroxylation at C20 to yield 20R,22R-hydroxycholesterol that is further cleaved between C20 and C22 to yield the C21-steroid pregnenolone and 4-methylpentanal. Mechanistically, uses molecular oxygen inserting one oxygen atom into a substrate and reducing the second into a water molecule. Two electrons are provided by NADPH via a two-protein mitochondrial transfer system comprising flavoprotein FDXR (adrenodoxin/ferredoxin reductase) and nonheme iron-sulfur protein FDX1 or FDX2 (adrenodoxin/ferredoxin). The polypeptide is Cholesterol side-chain cleavage enzyme, mitochondrial (CYP11A1) (Equus caballus (Horse)).